Reading from the N-terminus, the 390-residue chain is Cell adhesion molecule 4 (390 aa).

An N-terminal signal peptide occupies residues 1–27 (MAPALTALNRCFVLGILLLVTAGTAFS). Positions 28–122 (QEVQAENVTV…DTHHQIATLT (95 aa)) constitute an Ig-like V-type domain. Residues 28 to 326 (QEVQAENVTV…IEAQTQVPYA (299 aa)) are Extracellular-facing. N34 and N70 each carry an N-linked (GlcNAc...) asparagine glycan. Cystine bridges form between C47-C107, C148-C202, and C247-C293. Ig-like C2-type domains lie at 127-219 (PDNP…TQYE) and 226-309 (PTAS…YVLV). N-linked (GlcNAc...) asparagine glycosylation is found at N264 and N288. Residues 327-347 (VIGGILALLVFLVICILIVMV) form a helical membrane-spanning segment. At 348–390 (WCSVRQKGSYLTHEASGLDEHGEAREAFLNGGENHKRKEEFFI) the chain is on the cytoplasmic side.

Belongs to the nectin family.

It is found in the membrane. Functionally, involved in the cell-cell adhesion. The polypeptide is Cell adhesion molecule 4 (cadm4) (Xenopus laevis (African clawed frog)).